Reading from the N-terminus, the 124-residue chain is Fluoride-specific ion channel FluC (124 aa).

The next 4 membrane-spanning stretches (helical) occupy residues 4-24 (LLFV…MSII), 35-55 (FGTL…YALG), 62-82 (PELK…FSTF), and 95-115 (WFKS…MVYL). The Na(+) site is built by glycine 74 and threonine 77.

Belongs to the fluoride channel Fluc/FEX (TC 1.A.43) family.

The protein resides in the cell inner membrane. It carries out the reaction fluoride(in) = fluoride(out). With respect to regulation, na(+) is not transported, but it plays an essential structural role and its presence is essential for fluoride channel function. Its function is as follows. Fluoride-specific ion channel. Important for reducing fluoride concentration in the cell, thus reducing its toxicity. The protein is Fluoride-specific ion channel FluC of Shewanella denitrificans (strain OS217 / ATCC BAA-1090 / DSM 15013).